We begin with the raw amino-acid sequence, 451 residues long: Phosphoglucosamine mutase (451 aa).

Residue S107 is the Phosphoserine intermediate of the active site. Mg(2+) is bound by residues S107, D246, D248, and D250. The residue at position 107 (S107) is a Phosphoserine.

The protein belongs to the phosphohexose mutase family. It depends on Mg(2+) as a cofactor. Post-translationally, activated by phosphorylation.

The enzyme catalyses alpha-D-glucosamine 1-phosphate = D-glucosamine 6-phosphate. Its function is as follows. Catalyzes the conversion of glucosamine-6-phosphate to glucosamine-1-phosphate. In Burkholderia vietnamiensis (strain G4 / LMG 22486) (Burkholderia cepacia (strain R1808)), this protein is Phosphoglucosamine mutase.